The sequence spans 549 residues: Chaperonin GroEL (549 aa).

Residues 29–32 (TLGP), Lys50, 86–90 (DGTTT), Gly414, 478–480 (NAA), and Asp494 each bind ATP.

This sequence belongs to the chaperonin (HSP60) family. As to quaternary structure, forms a cylinder of 14 subunits composed of two heptameric rings stacked back-to-back. Interacts with the co-chaperonin GroES.

It localises to the cytoplasm. It carries out the reaction ATP + H2O + a folded polypeptide = ADP + phosphate + an unfolded polypeptide.. Its function is as follows. Together with its co-chaperonin GroES, plays an essential role in assisting protein folding. The GroEL-GroES system forms a nano-cage that allows encapsulation of the non-native substrate proteins and provides a physical environment optimized to promote and accelerate protein folding. The polypeptide is Chaperonin GroEL (Psychrobacter cryohalolentis (strain ATCC BAA-1226 / DSM 17306 / VKM B-2378 / K5)).